Consider the following 980-residue polypeptide: MSSGCRSVGGSTWGNWRGDGGDLRQRRVLSPVCSAPAAGSWIGSQLGNVGNLLATPHPLGKPASSRVGTIVLACLLLFGSCVVRAVPTTPSPPTSTPTSMSTHSHGTVDPTLLPTETPDPLRLAVRESGILAEDGDFYTCPPPTGSTVVRIEPPRTCPKFDLGRNFTEGIAVIFKENIAPYKFRANVYYKDIVVTRVWKGYSHTSLSDRYNDRVPVSVEEIFGLIDSKGKCSSKAEYLRDNIMHHAYHDDEDEVELDLVPSKFATPGARAWQTTNDTTSYVGWMPWRHYTSTSVNCIVEEVEARSVYPYDSFALSTGDIVYASPFYGLRAAARIEHNSYAQDSFRQVEGYRPRDLDSKLQAEEPVTKNFITTPHVTVSWNWTEKKVEACTLTKWKEVDELVRDEFRGSYRFTIRSISSTFISNTTQFKLESAPLTECVSKEAKEAIDSIYKKQYESTHVFSGDVEYYLARGGFLIAFRPMLSNELARLYLNELVRSNRTYDLKNLLNPNANNNNNTTRRRRSLLSVPEPQPTQDGVHREQILHRLHKRAVEATAGTDSSNVTAKQLELIKTTSSIEFAMLQFAYDHIQSHVNEMLSRIATAWCTLQNKERTLWNEMVKINPSAIVSATLDERVAARVLGDVIAITHCAKIEGNVYLQNSMRSMDSNTCYSRPPVTFTITKNANNRGSIEGQLGEENEIFTERKLIEPCALNQKRYFKFGKEYVYYENYTFVRKVPPTEIEVISTYVELNLTLLEDREFLPLEVYTRAELEDTGLLDYSEIQRRNQLHALRFYDIDSVVNVDNTAVIMQGIASFFKGLGKVGEAVGTLVLAAAGAVVSTVSGIASFLNNPFGGLAIGLLVIAGLVAAFFAYRYVMQIRSNPMKALYPITTKALKNKAKTSYGQNEEDDGSDFDEAKLEEAREMIKYMSMVSALEKQEKKAIKKNSGVGLIASNVSKLALRRRGPKYTRLQQNDTMENEKMV.

Over residues 1 to 14 (MSSGCRSVGGSTWG) the composition is skewed to polar residues. 2 disordered regions span residues 1–20 (MSSG…RGDG) and 88–118 (TTPS…TETP). Residues 1–86 (MSSGCRSVGG…LFGSCVVRAV (86 aa)) form the signal peptide. The Virion surface segment spans residues 87–849 (PTTPSPPTST…SGIASFLNNP (763 aa)). Over residues 96–118 (TPTSMSTHSHGTVDPTLLPTETP) the composition is skewed to low complexity. Cystine bridges form between Cys140–Cys647, Cys157–Cys603, Cys231–Cys296, Cys389–Cys437, and Cys668–Cys708. N-linked (GlcNAc...) asparagine; by host glycosylation occurs at Asn165. Residues 197-203 (VWKGYSH) are involved in fusion and/or binding to host membrane. The N-linked (GlcNAc...) asparagine; by host glycan is linked to Asn275. The interval 282-290 (GWMPWRHYT) is involved in fusion and/or binding to host membrane. Residues Asn380, Asn423, Asn497, Asn514, Asn515, and Asn560 are each glycosylated (N-linked (GlcNAc...) asparagine; by host). Residues 505–516 (LLNPNANNNNNT) are compositionally biased toward low complexity. The segment at 505-535 (LLNPNANNNNNTTRRRRSLLSVPEPQPTQDG) is disordered. Residues Asn727 and Asn749 are each glycosylated (N-linked (GlcNAc...) asparagine; by host). 2 hydrophobic membrane proximal region regions span residues 794 to 847 (IDSV…SFLN) and 823 to 843 (AVGT…SGIA). The chain crosses the membrane as a helical span at residues 850–870 (FGGLAIGLLVIAGLVAAFFAY). Topologically, residues 871 to 980 (RYVMQIRSNP…NDTMENEKMV (110 aa)) are intravirion. Positions 925–928 (YMSM) match the Golgi targeting motif. The short motif at 965–968 (YTRL) is the Internalization motif element.

This sequence belongs to the herpesviridae glycoprotein B family. As to quaternary structure, homotrimer; disulfide-linked. Binds to heparan sulfate proteoglycans. Interacts with gH/gL heterodimer. In terms of processing, a proteolytic cleavage by host furin generates two subunits that remain linked by disulfide bonds.

The protein resides in the virion membrane. It is found in the host cell membrane. The protein localises to the host endosome membrane. Its subcellular location is the host Golgi apparatus membrane. Functionally, envelope glycoprotein that forms spikes at the surface of virion envelope. Essential for the initial attachment to heparan sulfate moieties of the host cell surface proteoglycans. Involved in fusion of viral and cellular membranes leading to virus entry into the host cell. Following initial binding to its host receptors, membrane fusion is mediated by the fusion machinery composed at least of gB and the heterodimer gH/gL. May be involved in the fusion between the virion envelope and the outer nuclear membrane during virion egress. The chain is Envelope glycoprotein B from Equine herpesvirus 1 (strain AB1) (EHV-1).